The primary structure comprises 297 residues: MKRPDYRTLQALDAVIRERGFERAAQKLCITQSAVSQRIKQLENLFGQPLLVRTIPPRPTEQGQKLLALLHQVELLEEEWLGNETNSDIPLLLSLAVNADSLATWLLPALQPVLVDSPIRLNLQVEDETRTQERLRRGEVVGAVSIQSQPLPSCLVDKLGALDYLFVASPTFAARYFPNGVTRSALLRAPAVAFDHLDDMHQAFLQQNFDLSPGSVPCHIVNSSEAFVQLARQGTTCCMIPHLQIEKELANNELVDLTPGLFQRRMLYWHRFAPESRMMRKVTDALLAHGHQVLRQS.

Residues P4–T60 enclose the HTH lysR-type domain. Positions F21 to K40 form a DNA-binding region, H-T-H motif.

Belongs to the LysR transcriptional regulatory family. In terms of assembly, homodimer.

In terms of biological role, controls the transcription of genes involved in arginine and lysine metabolism. This chain is HTH-type transcriptional regulator ArgP, found in Pectobacterium carotovorum subsp. carotovorum (strain PC1).